Consider the following 299-residue polypeptide: Cytidine deaminase (299 aa).

2 CMP/dCMP-type deaminase domains span residues 56-176 (SKIE…FGPK) and 194-299 (LQGD…YIAV). Residue 97-99 (NQE) coordinates substrate. Residue histidine 110 coordinates Zn(2+). Catalysis depends on glutamate 112, which acts as the Proton donor. Zn(2+) is bound by residues cysteine 137 and cysteine 140.

The protein belongs to the cytidine and deoxycytidylate deaminase family. In terms of assembly, homodimer. The cofactor is Zn(2+).

The enzyme catalyses cytidine + H2O + H(+) = uridine + NH4(+). The catalysed reaction is 2'-deoxycytidine + H2O + H(+) = 2'-deoxyuridine + NH4(+). In terms of biological role, this enzyme scavenges exogenous and endogenous cytidine and 2'-deoxycytidine for UMP synthesis. The polypeptide is Cytidine deaminase (Haemophilus ducreyi (strain 35000HP / ATCC 700724)).